Consider the following 446-residue polypeptide: Amino-acid acetyltransferase (446 aa).

The N-acetyltransferase domain maps to 299 to 438 (EQVRDAEIDD…QKLYNFQRKS (140 aa)).

Belongs to the acetyltransferase family. ArgA subfamily.

The protein localises to the cytoplasm. It catalyses the reaction L-glutamate + acetyl-CoA = N-acetyl-L-glutamate + CoA + H(+). The protein operates within amino-acid biosynthesis; L-arginine biosynthesis; N(2)-acetyl-L-ornithine from L-glutamate: step 1/4. The sequence is that of Amino-acid acetyltransferase from Aliivibrio fischeri (strain ATCC 700601 / ES114) (Vibrio fischeri).